A 379-amino-acid chain; its full sequence is uncharacterized protein (379 aa).

A helical membrane pass occupies residues 9–26 (YFQLITTIFLISSITIAA).

This sequence to A.liquefaciens L-sorbosone dehydrogenase.

It is found in the membrane. This is an uncharacterized protein from Borreliella burgdorferi (strain ATCC 35210 / DSM 4680 / CIP 102532 / B31) (Borrelia burgdorferi).